The following is a 206-amino-acid chain: Large ribosomal subunit protein uL4 (206 aa).

Basic residues predominate over residues 65–76 (KQKGTGRARHSS). Residues 65-94 (KQKGTGRARHSSARAPQFRGGGKAHGPVVR) are disordered.

Belongs to the universal ribosomal protein uL4 family. As to quaternary structure, part of the 50S ribosomal subunit.

In terms of biological role, one of the primary rRNA binding proteins, this protein initially binds near the 5'-end of the 23S rRNA. It is important during the early stages of 50S assembly. It makes multiple contacts with different domains of the 23S rRNA in the assembled 50S subunit and ribosome. Forms part of the polypeptide exit tunnel. This is Large ribosomal subunit protein uL4 from Bartonella quintana (strain Toulouse) (Rochalimaea quintana).